Reading from the N-terminus, the 519-residue chain is Flavin-dependent halogenase rdc2 (519 aa).

The first 21 residues, 1-21, serve as a signal peptide directing secretion; sequence MSVPKSCTILVAGGGPAGSYA. Residues glycine 14, alanine 17, and glutamate 47 each coordinate FAD. The chloride site is built by serine 324 and glycine 325.

This sequence belongs to the flavin-dependent halogenase family.

The protein operates within secondary metabolite biosynthesis. Functionally, flavin-dependent halogenase; part of the gene cluster that mediates the biosynthesis of radicicol, a resorcylic acid lactone (RAL) that irreversibly inhibits the HSP90 molecular chaperone, an important target for cancer chemotherapy. Within the cluster, rdc2 is involved in the chlorination of the resorcylic acid lactone (RAL) structure to convert monocillin I into radicicol. Also chlorinates monocillin II to produce 6-cholomonocillin II and monocilllin IV to produce 13-chloromonocillin IV. In contrast to most fungal halogenases, rdc2 has a broad substrate specificity and can accept a variety of macrolactones as the substrates to generate chlorinated derivatives, including dihydroresorcylide, zearalenone, curvularin, or even curcumin. Rdc2 is able to dichlorinate dihydroresorcylide and monocillin IV. Dihydroresorcylide is first chlorinated at position 11 to produce 11-chlorodihydroresorcylide which can be further chlorinated by rdc2 at possition 13. Mororeover, rdc2 can incorporate bromine into dihydroresorcylide to yield the corresponding mono- and di-brominated derivatives. Finally, rdc2 is also able to halogenate the isoquinolines 4-hydroxyisoquinoline and 6-hydroxyisoquinoline into 3-chloro-4-hydroxyisoquinoline and 5-chloro-6-hydroxyisoquinoline, respectively. The radicicol cluster encodes only two apparent post-PKS enzymes, a cytochrome P450 monooxygenase (rdc4) and a non-heme halogenase (rdc2) that could introduce the epoxide and the chlorine, respectively. If this cluster includes all the genes required for radicicol biosynthesis, the remaining structural features of radicicol are presumably generated by the PKSs rdc1 and rdc5. The C-2' ketone could arise if the R-PKS rdc5 and NR-PKS rdc1 each carry out four iterations, in contrast to the five iteration-three iteration split for the hypothemycin PKSs. The origin of the cis 5',6' double bond is not known. The radicicol R-PKS rdc5 ER domain may catalyze either double bond isomerization or reduction in the third iteration. The polypeptide is Flavin-dependent halogenase rdc2 (Metacordyceps chlamydosporia (Nematophagous fungus)).